A 301-amino-acid polypeptide reads, in one-letter code: tRNA pseudouridine synthase B (301 aa).

Catalysis depends on Asp45, which acts as the Nucleophile.

Belongs to the pseudouridine synthase TruB family. Type 1 subfamily.

It carries out the reaction uridine(55) in tRNA = pseudouridine(55) in tRNA. Functionally, responsible for synthesis of pseudouridine from uracil-55 in the psi GC loop of transfer RNAs. In Streptomyces coelicolor (strain ATCC BAA-471 / A3(2) / M145), this protein is tRNA pseudouridine synthase B.